The sequence spans 184 residues: UPF0301 protein SPO0296 (184 aa).

This sequence belongs to the UPF0301 (AlgH) family.

This chain is UPF0301 protein SPO0296, found in Ruegeria pomeroyi (strain ATCC 700808 / DSM 15171 / DSS-3) (Silicibacter pomeroyi).